The primary structure comprises 105 residues: Heat shock protein HspQ (105 aa).

Belongs to the HspQ family.

Its subcellular location is the cytoplasm. In terms of biological role, involved in the degradation of certain denaturated proteins, including DnaA, during heat shock stress. This chain is Heat shock protein HspQ, found in Yersinia enterocolitica serotype O:8 / biotype 1B (strain NCTC 13174 / 8081).